Here is a 314-residue protein sequence, read N- to C-terminus: Thymidylate synthase (314 aa).

DUMP-binding positions include R21 and 176–177 (RR). The active-site Nucleophile is C196. Residues 216–219 (RSAD), N227, and 257–259 (HLY) contribute to the dUMP site. D219 contacts (6R)-5,10-methylene-5,6,7,8-tetrahydrofolate. S313 contributes to the (6R)-5,10-methylene-5,6,7,8-tetrahydrofolate binding site.

The protein belongs to the thymidylate synthase family. Bacterial-type ThyA subfamily. In terms of assembly, homodimer.

Its subcellular location is the cytoplasm. It catalyses the reaction dUMP + (6R)-5,10-methylene-5,6,7,8-tetrahydrofolate = 7,8-dihydrofolate + dTMP. The protein operates within pyrimidine metabolism; dTTP biosynthesis. Functionally, catalyzes the reductive methylation of 2'-deoxyuridine-5'-monophosphate (dUMP) to 2'-deoxythymidine-5'-monophosphate (dTMP) while utilizing 5,10-methylenetetrahydrofolate (mTHF) as the methyl donor and reductant in the reaction, yielding dihydrofolate (DHF) as a by-product. This enzymatic reaction provides an intracellular de novo source of dTMP, an essential precursor for DNA biosynthesis. In Listeria monocytogenes serotype 4b (strain CLIP80459), this protein is Thymidylate synthase.